Reading from the N-terminus, the 2376-residue chain is Cell morphogenesis protein PAG1 (2376 aa).

The disordered stretch occupies residues 1–30; it reads MASRFTFPPQRDQGIGFTFPPTNKAEGSSN. Serine 141 is subject to Phosphoserine. A disordered region spans residues 275 to 294; the sequence is SSSNTTSKYKHNNNTNNLPG. At serine 1144 the chain carries Phosphoserine. Threonine 2264 carries the phosphothreonine modification. A phosphoserine mark is found at serine 2267 and serine 2355.

This sequence to S.pombe mor2. In terms of assembly, associates with CBK1.

Seems to play a role in cell morphogenesis. This Saccharomyces cerevisiae (strain ATCC 204508 / S288c) (Baker's yeast) protein is Cell morphogenesis protein PAG1 (TAO3).